We begin with the raw amino-acid sequence, 653 residues long: Macrolide export ATP-binding/permease protein MacB (653 aa).

The 239-residue stretch at Ile6–Pro244 folds into the ABC transporter domain. Gly42 to Ser49 is an ATP binding site. The next 4 helical transmembrane spans lie at Leu275–Gly295, Phe525–Met545, Phe576–Leu596, and Trp616–Trp636.

This sequence belongs to the ABC transporter superfamily. Macrolide exporter (TC 3.A.1.122) family. As to quaternary structure, homodimer. Part of the tripartite efflux system MacAB-TolC, which is composed of an inner membrane transporter, MacB, a periplasmic membrane fusion protein, MacA, and an outer membrane component, TolC. The complex forms a large protein conduit and can translocate molecules across both the inner and outer membranes. Interacts with MacA.

The protein resides in the cell inner membrane. Part of the tripartite efflux system MacAB-TolC. MacB is a non-canonical ABC transporter that contains transmembrane domains (TMD), which form a pore in the inner membrane, and an ATP-binding domain (NBD), which is responsible for energy generation. Confers resistance against macrolides. The polypeptide is Macrolide export ATP-binding/permease protein MacB (Sodalis glossinidius (strain morsitans)).